Reading from the N-terminus, the 643-residue chain is Manganese lipoxygenase (643 aa).

Positions 166–643 (WYTDEVFAQQ…PEQLANAIVI (478 aa)) constitute a Lipoxygenase domain. The Mn(2+) site is built by histidine 325, histidine 330, histidine 510, asparagine 514, and isoleucine 643.

It belongs to the lipoxygenase family. Requires Mn(2+) as cofactor.

The catalysed reaction is (9Z,12Z)-octadecadienoate + O2 = (13S)-hydroperoxy-(9Z,11E)-octadecadienoate. Functionally, lipoxygenase that metabolizes linoleic and alpha-linolenic acids to 13S-hydroperoxy fatty acids. The polypeptide is Manganese lipoxygenase (Pleurotus sapidus (Oyster mushroom)).